Reading from the N-terminus, the 485-residue chain is Amyloid beta A4 precursor protein-binding family B member 1-interacting protein (485 aa).

The segment covering 84-107 (QAQKTSGNQQSVVTQPSTGTNNDF) has biased composition (polar residues). Residues 84–157 (QAQKTSGNQQ…LSQEEQEARA (74 aa)) form a disordered region. Pro residues predominate over residues 125–147 (LPPPPPAPDLDLPPPPPPPPPEP). A Ras-associating domain is found at 175–262 (KKLVVKVHMY…KVLFLEKKEK (88 aa)). One can recognise a PH domain in the interval 305 to 414 (VPELEGALYL…WVTGIRIAKY (110 aa)).

The protein belongs to the MRL family.

The protein localises to the cell membrane. It is found in the cytoplasm. The protein resides in the cytoskeleton. Functionally, appears to function in the signal transduction from Ras activation to actin cytoskeletal remodeling. This is Amyloid beta A4 precursor protein-binding family B member 1-interacting protein (APBB1IP) from Gallus gallus (Chicken).